The sequence spans 128 residues: MKQQVEVKELKEGKYVIIDDEACVIKSITKSKPGKHGAAKARVEAIGLFDGQKRSYIGSVANKVYVPIVERKSAQVISITGDIAQLMDMGDFSTFEIVIPDELKDRVKEGEEVSYITALGKVKLDIRT.

At K35 the chain carries Hypusine.

It belongs to the eIF-5A family.

The protein localises to the cytoplasm. Functionally, functions by promoting the formation of the first peptide bond. In Methanosarcina mazei (strain ATCC BAA-159 / DSM 3647 / Goe1 / Go1 / JCM 11833 / OCM 88) (Methanosarcina frisia), this protein is Translation initiation factor 5A (eif5a).